We begin with the raw amino-acid sequence, 440 residues long: 2-methylisoborneol synthase (440 aa).

Positions 1–116 (MPDSGPLGPH…SPAPAEPAAG (116 aa)) are disordered. A compositionally biased stretch (low complexity) spans 17–27 (TPATTVPDAPA). The segment covering 48–58 (PPVPIPSPSPP) has biased composition (pro residues). Residues 59–75 (SGSASAAADTPDATTVG) are compositionally biased toward low complexity. Over residues 102–111 (PSLPGSPAPA) the composition is skewed to pro residues. Positions 197, 198, 202, 345, 349, and 353 each coordinate Mg(2+).

It belongs to the terpene synthase family. 2-methylisoborneol synthase subfamily. The cofactor is Mg(2+).

It carries out the reaction (E)-2-methylgeranyl diphosphate + H2O = 2-methylisoborneol + diphosphate. Functionally, catalyzes the cyclization of 2-methylgeranyl diphosphate (2-MeGPP) to 2-methylisoborneol (2-MIB), which likely involves the intermediacy of 2-methyllinalyl diphosphate. The polypeptide is 2-methylisoborneol synthase (Streptomyces ambofaciens (strain ATCC 23877 / 3486 / DSM 40053 / JCM 4204 / NBRC 12836 / NRRL B-2516)).